We begin with the raw amino-acid sequence, 400 residues long: Queuine tRNA-ribosyltransferase catalytic subunit (400 aa).

Aspartate 89 serves as the catalytic Proton acceptor. Residues 89–93 (DSGGF), aspartate 143, glutamine 185, and glycine 212 each bind substrate. Residues 243-249 (GVGFPVD) form an RNA binding region. Aspartate 262 serves as the catalytic Nucleophile. Positions 267-271 (TRTAR) are RNA binding; important for wobble base 34 recognition. Zn(2+) is bound by residues cysteine 301, cysteine 303, cysteine 306, and histidine 331.

It belongs to the queuine tRNA-ribosyltransferase family. Heterodimer of a catalytic subunit and an accessory subunit. It depends on Zn(2+) as a cofactor.

Its subcellular location is the cytoplasm. It carries out the reaction guanosine(34) in tRNA + queuine = queuosine(34) in tRNA + guanine. Its function is as follows. Catalytic subunit of the queuine tRNA-ribosyltransferase (TGT) that catalyzes the base-exchange of a guanine (G) residue with queuine (Q) at position 34 (anticodon wobble position) in tRNAs with GU(N) anticodons (tRNA-Asp, -Asn, -His and -Tyr), resulting in the hypermodified nucleoside queuosine (7-(((4,5-cis-dihydroxy-2-cyclopenten-1-yl)amino)methyl)-7-deazaguanosine). Catalysis occurs through a double-displacement mechanism. The nucleophile active site attacks the C1' of nucleotide 34 to detach the guanine base from the RNA, forming a covalent enzyme-RNA intermediate. The proton acceptor active site deprotonates the incoming queuine, allowing a nucleophilic attack on the C1' of the ribose to form the product. The chain is Queuine tRNA-ribosyltransferase catalytic subunit from Caenorhabditis briggsae.